The chain runs to 266 residues: N-formylglutamate deformylase (266 aa).

Belongs to the N-formylglutamate deformylase family. As to quaternary structure, monomer.

It catalyses the reaction N-formyl-L-glutamate + H2O = formate + L-glutamate. It participates in amino-acid degradation; L-histidine degradation into L-glutamate; L-glutamate from N-formimidoyl-L-glutamate (deiminase route): step 2/2. In terms of biological role, catalyzes the hydrolysis of N-formyl-L-glutamate to formate and L-glutamate. Shows weak activity with N-formyl-L-glutamine. The chain is N-formylglutamate deformylase from Pseudomonas aeruginosa (strain ATCC 15692 / DSM 22644 / CIP 104116 / JCM 14847 / LMG 12228 / 1C / PRS 101 / PAO1).